We begin with the raw amino-acid sequence, 402 residues long: Multidrug resistance protein MdtH (402 aa).

Over M1–K12 the chain is Cytoplasmic. The helical transmembrane segment at Y13 to I33 threads the bilayer. The Periplasmic portion of the chain corresponds to S34 to E98. Residues P99–F116 traverse the membrane as a helical segment. The Cytoplasmic portion of the chain corresponds to D117–S138. A helical transmembrane segment spans residues L139–L159. The Periplasmic portion of the chain corresponds to Q160–R164. A helical transmembrane segment spans residues L165 to L185. Over P186–Y213 the chain is Cytoplasmic. The chain crosses the membrane as a helical span at residues V214–M234. At V235–S243 the chain is on the periplasmic side. The helical transmembrane segment at A244–A264 threads the bilayer. Residues R265 to R276 lie on the Cytoplasmic side of the membrane. A helical transmembrane segment spans residues L277 to L297. At Q298–Q299 the chain is on the periplasmic side. A helical membrane pass occupies residues L300 to T320. Over L321–R339 the chain is Cytoplasmic. The chain crosses the membrane as a helical span at residues L340–G360. Over K361–E367 the chain is Periplasmic. Residues L368–F388 traverse the membrane as a helical segment. Residues S389 to A402 are Cytoplasmic-facing.

Belongs to the major facilitator superfamily. DHA1 family. MdtH (TC 2.A.1.2.21) subfamily.

Its subcellular location is the cell inner membrane. Confers resistance to norfloxacin and enoxacin. This chain is Multidrug resistance protein MdtH, found in Escherichia coli O7:K1 (strain IAI39 / ExPEC).